A 557-amino-acid polypeptide reads, in one-letter code: Dihydroxy-acid dehydratase (557 aa).

A [2Fe-2S] cluster-binding site is contributed by Cys-50. Asp-82 is a binding site for Mg(2+). Position 123 (Cys-123) interacts with [2Fe-2S] cluster. Residues Asp-124 and Lys-125 each coordinate Mg(2+). An N6-carboxylysine modification is found at Lys-125. Residue Cys-195 coordinates [2Fe-2S] cluster. Residue Glu-447 participates in Mg(2+) binding. Ser-473 (proton acceptor) is an active-site residue.

This sequence belongs to the IlvD/Edd family. As to quaternary structure, homodimer. [2Fe-2S] cluster is required as a cofactor. The cofactor is Mg(2+).

It carries out the reaction (2R)-2,3-dihydroxy-3-methylbutanoate = 3-methyl-2-oxobutanoate + H2O. The catalysed reaction is (2R,3R)-2,3-dihydroxy-3-methylpentanoate = (S)-3-methyl-2-oxopentanoate + H2O. The protein operates within amino-acid biosynthesis; L-isoleucine biosynthesis; L-isoleucine from 2-oxobutanoate: step 3/4. It participates in amino-acid biosynthesis; L-valine biosynthesis; L-valine from pyruvate: step 3/4. Functions in the biosynthesis of branched-chain amino acids. Catalyzes the dehydration of (2R,3R)-2,3-dihydroxy-3-methylpentanoate (2,3-dihydroxy-3-methylvalerate) into 2-oxo-3-methylpentanoate (2-oxo-3-methylvalerate) and of (2R)-2,3-dihydroxy-3-methylbutanoate (2,3-dihydroxyisovalerate) into 2-oxo-3-methylbutanoate (2-oxoisovalerate), the penultimate precursor to L-isoleucine and L-valine, respectively. This is Dihydroxy-acid dehydratase from Ralstonia nicotianae (strain ATCC BAA-1114 / GMI1000) (Ralstonia solanacearum).